Here is a 436-residue protein sequence, read N- to C-terminus: Glutamyl-tRNA reductase (436 aa).

Substrate is bound by residues 49–52 (TCNR), serine 109, 114–116 (EPQ), and glutamine 120. The active-site Nucleophile is cysteine 50. NADP(+) is bound at residue 189–194 (GAGEMC).

Belongs to the glutamyl-tRNA reductase family. In terms of assembly, homodimer.

The catalysed reaction is (S)-4-amino-5-oxopentanoate + tRNA(Glu) + NADP(+) = L-glutamyl-tRNA(Glu) + NADPH + H(+). It functions in the pathway porphyrin-containing compound metabolism; protoporphyrin-IX biosynthesis; 5-aminolevulinate from L-glutamyl-tRNA(Glu): step 1/2. In terms of biological role, catalyzes the NADPH-dependent reduction of glutamyl-tRNA(Glu) to glutamate 1-semialdehyde (GSA). The sequence is that of Glutamyl-tRNA reductase from Pelobacter propionicus (strain DSM 2379 / NBRC 103807 / OttBd1).